A 435-amino-acid chain; its full sequence is Methylenetetrahydrofolate--tRNA-(uracil-5-)-methyltransferase TrmFO (435 aa).

FAD is bound at residue 9-14; that stretch reads GAGLAG.

Belongs to the MnmG family. TrmFO subfamily. The cofactor is FAD.

The protein resides in the cytoplasm. The enzyme catalyses uridine(54) in tRNA + (6R)-5,10-methylene-5,6,7,8-tetrahydrofolate + NADH + H(+) = 5-methyluridine(54) in tRNA + (6S)-5,6,7,8-tetrahydrofolate + NAD(+). The catalysed reaction is uridine(54) in tRNA + (6R)-5,10-methylene-5,6,7,8-tetrahydrofolate + NADPH + H(+) = 5-methyluridine(54) in tRNA + (6S)-5,6,7,8-tetrahydrofolate + NADP(+). Functionally, catalyzes the folate-dependent formation of 5-methyl-uridine at position 54 (M-5-U54) in all tRNAs. This Staphylococcus haemolyticus (strain JCSC1435) protein is Methylenetetrahydrofolate--tRNA-(uracil-5-)-methyltransferase TrmFO.